We begin with the raw amino-acid sequence, 214 residues long: Probable transaldolase (214 aa).

Residue Lys-83 is the Schiff-base intermediate with substrate of the active site.

It belongs to the transaldolase family. Type 3B subfamily.

It is found in the cytoplasm. The catalysed reaction is D-sedoheptulose 7-phosphate + D-glyceraldehyde 3-phosphate = D-erythrose 4-phosphate + beta-D-fructose 6-phosphate. Its pathway is carbohydrate degradation; pentose phosphate pathway; D-glyceraldehyde 3-phosphate and beta-D-fructose 6-phosphate from D-ribose 5-phosphate and D-xylulose 5-phosphate (non-oxidative stage): step 2/3. Its function is as follows. Transaldolase is important for the balance of metabolites in the pentose-phosphate pathway. The protein is Probable transaldolase of Dictyoglomus turgidum (strain DSM 6724 / Z-1310).